We begin with the raw amino-acid sequence, 82 residues long: Consomatin Ro2 (82 aa).

Residues 1–22 (MQTAYWLMVMMMVWITAPLYEG) form the signal peptide. A propeptide spanning residues 23-57 (GKPNDVIRGLVPDDLTPQFILRSLISRRRSDKDVR) is cleaved from the precursor. A disulfide bond links C62 and C68. W64 bears the D-tryptophan mark. Residues P69 and P70 each carry the 4-hydroxyproline modification. A propeptide spanning residues 72–82 (LWRRHDRKGKD) is cleaved from the precursor.

It belongs to the conotoxin C superfamily. Consomatin family. As to expression, expressed by the venom duct.

Its subcellular location is the secreted. Functionally, moderately activates human somatostatin receptors (SSTR) with a preferential activation of SSTR1 and SSTR4. In vivo, does not cause behavioral changes in mice within a few minutes of intracranial injection, but causes a progressive loss of movement thereafter. Four to five hours after injection, mice recover, even with the highest dose tested. Shows antinociception and antihyperalgesia activities in two mouse models of acute pain, most probably by acting outside the central nervous system. The polypeptide is Consomatin Ro2 (Conus rolani (Cone snail)).